A 235-amino-acid polypeptide reads, in one-letter code: Zinc transporter ZIP9 (235 aa).

The N-linked (GlcNAc...) asparagine glycan is linked to N2. 4 helical membrane passes run 11 to 31 (SCVPILVFPSYWASFSCCWWT), 75 to 95 (TTTLGLVVHAAADGVALGAAA), 104 to 124 (LIVFVAIMLHKAPAAFGLVSF), and 138 to 158 (HLLVFSLAAPVMSMVTYLGLS). A glycan (N-linked (GlcNAc...) asparagine) is linked at N169. Transmembrane regions (helical) follow at residues 172 to 192 (GMAMLFSAGTFLYVATVHVLP) and 214 to 234 (LEVAALVLGCLIPLILSVGHQ).

It belongs to the ZIP transporter (TC 2.A.5) family.

The protein resides in the golgi apparatus. The protein localises to the trans-Golgi network membrane. It is found in the cell membrane. Its subcellular location is the cytoplasm. It localises to the perinuclear region. The protein resides in the mitochondrion. The protein localises to the nucleus. It catalyses the reaction Zn(2+)(in) = Zn(2+)(out). Transports zinc ions across cell and organelle membranes into the cytoplasm and regulates intracellular zinc homeostasis. Participates in the zinc ions efflux out of the secretory compartments. Regulates intracellular zinc level, resulting in the enhancement of AKT1 and MAPK3/MAPK1 (Erk1/2) phosphorylation in response to the BCR activation. Also functions as a membrane androgen receptor that mediates, through a G protein, the non-classical androgen signaling pathway, characterized by the activation of MAPK3/MAPK1 (Erk1/2) and transcription factors CREB1 or ATF1. This pathway contributes to CLDN1 and CLDN5 expression and tight junction formation between adjacent Sertoli cells. Mediates androgen-induced vascular endothelial cell proliferation through activation of an inhibitory G protein leading to the AKT1 and MAPK3/MAPK1 (Erk1/2) activation which in turn modulate inhibition (phosphorylation) of GSK3B and CCND1 transcription. Moreover, has dual functions as a membrane-bound androgen receptor and as an androgen-dependent zinc transporter both of which are mediated through an inhibitory G protein (Gi) that mediates both MAP kinase and zinc signaling leading to the androgen-dependent apoptotic process. The protein is Zinc transporter ZIP9 of Macaca fascicularis (Crab-eating macaque).